Here is a 182-residue protein sequence, read N- to C-terminus: Meiotically up-regulated gene 82 protein (182 aa).

The interval 161-182 is disordered; sequence EKRLSEKKYKQKKKTQRRITMD. The span at 169–182 shows a compositional bias: basic residues; sequence YKQKKKTQRRITMD.

The protein belongs to the prokaryotic/mitochondrial release factor family.

It localises to the mitochondrion. Functionally, has a role in meiosis. The chain is Meiotically up-regulated gene 82 protein (mug82) from Schizosaccharomyces pombe (strain 972 / ATCC 24843) (Fission yeast).